The primary structure comprises 576 residues: Proline--tRNA ligase (576 aa).

This sequence belongs to the class-II aminoacyl-tRNA synthetase family. ProS type 1 subfamily. In terms of assembly, homodimer.

It localises to the cytoplasm. It catalyses the reaction tRNA(Pro) + L-proline + ATP = L-prolyl-tRNA(Pro) + AMP + diphosphate. Catalyzes the attachment of proline to tRNA(Pro) in a two-step reaction: proline is first activated by ATP to form Pro-AMP and then transferred to the acceptor end of tRNA(Pro). As ProRS can inadvertently accommodate and process non-cognate amino acids such as alanine and cysteine, to avoid such errors it has two additional distinct editing activities against alanine. One activity is designated as 'pretransfer' editing and involves the tRNA(Pro)-independent hydrolysis of activated Ala-AMP. The other activity is designated 'posttransfer' editing and involves deacylation of mischarged Ala-tRNA(Pro). The misacylated Cys-tRNA(Pro) is not edited by ProRS. This chain is Proline--tRNA ligase, found in Bordetella bronchiseptica (strain ATCC BAA-588 / NCTC 13252 / RB50) (Alcaligenes bronchisepticus).